A 309-amino-acid chain; its full sequence is Neuropeptide-like 1 (309 aa).

The N-terminal stretch at 1 to 28 (MQAVLQSAHSSRRLMLLLSMLLNAAIQP) is a signal peptide. A propeptide spanning residues 29–99 (RSIIVSATDD…GEYPDYLEED (71 aa)) is cleaved from the precursor. The tract at residues 126–147 (GQLPTAEPGEDYGDADSGEPSE) is disordered. Residues 133–144 (PGEDYGDADSGE) show a composition bias toward acidic residues. A Tyrosine amide modification is found at Tyr-164. Asn-182 bears the Asparagine amide mark.

As to expression, MTYamide peptide: Expressed in the larval CNS (at protein level). NAP peptide: Expressed in the larval CNS (at protein level). IPNamide peptide: Expressed in the ventral ganglion of the third larval instar and adult brain (at protein level).

Its subcellular location is the secreted. Acts as a ligand for the receptor-type guanylate cyclase Gyc76C. Stimulates Gyc76c-dependent cGMP production and modulates the IMD innate immune pathway in response to salt stress by inducing nuclear translocation of NF-kappa-B protein Rel which leads to increased expression of the antimicrobial peptide diptericin. Does not appear to play a role in Gyc76C-mediated wing development. The sequence is that of Neuropeptide-like 1 (Nplp1) from Drosophila melanogaster (Fruit fly).